A 198-amino-acid polypeptide reads, in one-letter code: Imidazoleglycerol-phosphate dehydratase (198 aa).

Belongs to the imidazoleglycerol-phosphate dehydratase family.

It localises to the cytoplasm. The enzyme catalyses D-erythro-1-(imidazol-4-yl)glycerol 3-phosphate = 3-(imidazol-4-yl)-2-oxopropyl phosphate + H2O. The protein operates within amino-acid biosynthesis; L-histidine biosynthesis; L-histidine from 5-phospho-alpha-D-ribose 1-diphosphate: step 6/9. The chain is Imidazoleglycerol-phosphate dehydratase from Herminiimonas arsenicoxydans.